Here is a 290-residue protein sequence, read N- to C-terminus: Short-chain dehydrogenase srdE (290 aa).

NADP(+) contacts are provided by Ile-11, Thr-37, Asp-58, and Asn-86. A helical transmembrane segment spans residues Leu-125–Val-145. An NADP(+)-binding site is contributed by Tyr-150. Tyr-150 (proton donor) is an active-site residue. N-linked (GlcNAc...) asparagine glycosylation occurs at Asn-151. NADP(+) is bound by residues Lys-154, Val-183, and Thr-185. The active-site Lowers pKa of active site Tyr is Lys-154.

The protein belongs to the short-chain dehydrogenases/reductases (SDR) family.

The protein localises to the membrane. Short-chain dehydrogenase; part of the gene cluster that mediates the biosynthesis of sordarial, a salicylic aldehyde structurally related to the phytotoxin pyriculol. The most interesting aspect of this pathway is formation of an aromatic product from the highly reducing polyketide synthase srdA. SrdA synthesizes a reduced polyketide chain from one molecule of acetyl-CoA and five molecules of malonyl-CoA. The polyketide chain is then reductively released as an aldehyde. The oxidoreductases srdC, srdD and srdE then oxidize one of the hydroxy groups to facilitate the intramolecular aldol condensation, followed by dehydration to yield a salicylic aldehyde. This aldehyde can undergo facile reduction by endogenous reductases to yield the alcohol 1-hydroxy-2-hydroxymethyl-3-pent-1,3-dienylbenzene. The flavin-dependent srdI counteract against the propensity of the aldehydes to be reduced under physiological conditions and is responsible for reoxidizing 1-hydroxy-2-hydroxymethyl-3-pent-1,3-dienylbenzene back to the salicylic aldehyde. This salicylic aldehyde is then selectively epoxidized by the cupin-domain-containing oxidoreductase srdB to yield the epoxide, which can be hydrolyzed stereoselectively by the hydrolase srdG to give the final product sordarial. This chain is Short-chain dehydrogenase srdE, found in Neurospora crassa (strain ATCC 24698 / 74-OR23-1A / CBS 708.71 / DSM 1257 / FGSC 987).